A 152-amino-acid polypeptide reads, in one-letter code: Ribosome maturation factor RimP (152 aa).

It belongs to the RimP family.

The protein localises to the cytoplasm. Functionally, required for maturation of 30S ribosomal subunits. This chain is Ribosome maturation factor RimP, found in Fervidobacterium nodosum (strain ATCC 35602 / DSM 5306 / Rt17-B1).